The following is a 179-amino-acid chain: Inner membrane-spanning protein YciB (179 aa).

6 helical membrane-spanning segments follow: residues 3–23 (FLFD…ADIY), 24–44 (TATA…WFRH), 49–69 (PMQW…LVLH), 76–96 (WKPT…VIGW), 121–141 (AAWA…AYQF), and 149–169 (FKLF…SVWL).

The protein belongs to the YciB family.

The protein resides in the cell inner membrane. Its function is as follows. Plays a role in cell envelope biogenesis, maintenance of cell envelope integrity and membrane homeostasis. The protein is Inner membrane-spanning protein YciB of Cupriavidus necator (strain ATCC 17699 / DSM 428 / KCTC 22496 / NCIMB 10442 / H16 / Stanier 337) (Ralstonia eutropha).